The following is an 878-amino-acid chain: Phosphoenolpyruvate carboxylase (878 aa).

Residues His-138 and Lys-545 contribute to the active site.

Belongs to the PEPCase type 1 family. Mg(2+) is required as a cofactor.

The catalysed reaction is oxaloacetate + phosphate = phosphoenolpyruvate + hydrogencarbonate. Functionally, forms oxaloacetate, a four-carbon dicarboxylic acid source for the tricarboxylic acid cycle. The polypeptide is Phosphoenolpyruvate carboxylase (Shewanella sediminis (strain HAW-EB3)).